The primary structure comprises 219 residues: Polysialic acid transport ATP-binding protein KpsT (219 aa).

The ABC transporter domain occupies 2–218 (IKIENLTKSY…TEAIADYKKD (217 aa)). 38–45 (GQNGAGKS) contributes to the ATP binding site.

Belongs to the ABC transporter superfamily.

The protein localises to the cell inner membrane. Its function is as follows. Putative ATP-binding protein, and an energy coupling component for the transport of polysialic acid across the cytoplasmic membrane. In Escherichia coli, this protein is Polysialic acid transport ATP-binding protein KpsT (kpsT).